The chain runs to 472 residues: GTPase Der (472 aa).

EngA-type G domains are found at residues 3 to 166 and 176 to 349; these read PVIA…PEQE and IRIG…DSAM. GTP contacts are provided by residues 9 to 16, 56 to 60, 118 to 121, 182 to 189, 229 to 233, and 294 to 297; these read GRPNVGKS, DTGGI, NKID, DTAGV, and NKWD. One can recognise a KH-like domain in the interval 350 to 434; that stretch reads AKWSTNQLTT…PIRFEFRSGE (85 aa). Positions 433–472 are disordered; it reads GENPFAGKKNKLSPRQQKKKERLMKHVKKLKHKQKRKKSR. Residues 440–472 show a composition bias toward basic residues; it reads KKNKLSPRQQKKKERLMKHVKKLKHKQKRKKSR.

It belongs to the TRAFAC class TrmE-Era-EngA-EngB-Septin-like GTPase superfamily. EngA (Der) GTPase family. Associates with the 50S ribosomal subunit.

Functionally, GTPase that plays an essential role in the late steps of ribosome biogenesis. The chain is GTPase Der from Hahella chejuensis (strain KCTC 2396).